Consider the following 378-residue polypeptide: Beta sliding clamp (378 aa).

Belongs to the beta sliding clamp family. Forms a ring-shaped head-to-tail homodimer around DNA which binds and tethers DNA polymerases and other proteins to the DNA. The DNA replisome complex has a single clamp-loading complex (3 tau and 1 each of delta, delta', psi and chi subunits) which binds 3 Pol III cores (1 core on the leading strand and 2 on the lagging strand) each with a beta sliding clamp dimer. Additional proteins in the replisome are other copies of gamma, psi and chi, Ssb, DNA helicase and RNA primase. Interacts with YabA, and via YabA, with DnaA. During sporulation probably interacts with SirA.

It localises to the cytoplasm. Its subcellular location is the nucleoid. Confers DNA tethering and processivity to DNA polymerases and other proteins. Acts as a clamp, forming a ring around DNA (a reaction catalyzed by the clamp-loading complex) which diffuses in an ATP-independent manner freely and bidirectionally along dsDNA. Initially characterized for its ability to contact the catalytic subunit of DNA polymerase III (Pol III), a complex, multichain enzyme responsible for most of the replicative synthesis in bacteria; Pol III exhibits 3'-5' exonuclease proofreading activity. The beta chain is required for initiation of replication as well as for processivity of DNA replication. Overexpression in vivo stimulates inititation of DNA replication from oriC. Increased levels of DnaN remove YabA from its association with DnaA on the chromosome, allowing DnaA to bind to its targets. Its interaction with DnaA probably serves as a sink to prevent excessive replication initiation. The chain is Beta sliding clamp from Bacillus subtilis (strain 168).